The following is a 280-amino-acid chain: Dermonecrotic toxin LsSicTox-alphaIA1 (280 aa).

H12 is an active-site residue. Positions 32 and 34 each coordinate Mg(2+). Residue H48 is the Nucleophile of the active site. Cystine bridges form between C52–C58 and C54–C197. D92 is a binding site for Mg(2+).

It belongs to the arthropod phospholipase D family. Class II subfamily. Mg(2+) is required as a cofactor. As to expression, expressed by the venom gland.

Its subcellular location is the secreted. It catalyses the reaction an N-(acyl)-sphingosylphosphocholine = an N-(acyl)-sphingosyl-1,3-cyclic phosphate + choline. It carries out the reaction an N-(acyl)-sphingosylphosphoethanolamine = an N-(acyl)-sphingosyl-1,3-cyclic phosphate + ethanolamine. The enzyme catalyses a 1-acyl-sn-glycero-3-phosphocholine = a 1-acyl-sn-glycero-2,3-cyclic phosphate + choline. The catalysed reaction is a 1-acyl-sn-glycero-3-phosphoethanolamine = a 1-acyl-sn-glycero-2,3-cyclic phosphate + ethanolamine. In terms of biological role, dermonecrotic toxins cleave the phosphodiester linkage between the phosphate and headgroup of certain phospholipids (sphingolipid and lysolipid substrates), forming an alcohol (often choline) and a cyclic phosphate. This toxin acts on sphingomyelin (SM). It may also act on ceramide phosphoethanolamine (CPE), lysophosphatidylcholine (LPC) and lysophosphatidylethanolamine (LPE), but not on lysophosphatidylserine (LPS), and lysophosphatidylglycerol (LPG). It acts by transphosphatidylation, releasing exclusively cyclic phosphate products as second products. Induces dermonecrosis, hemolysis, increased vascular permeability, edema, inflammatory response, and platelet aggregation. This chain is Dermonecrotic toxin LsSicTox-alphaIA1, found in Loxosceles similis (Brazilian brown spider).